Consider the following 363-residue polypeptide: Phospho-N-acetylmuramoyl-pentapeptide-transferase (363 aa).

A run of 10 helical transmembrane segments spans residues 27 to 47 (SGCA…PFIA), 76 to 96 (TMGG…WADL), 97 to 117 (TNGF…VGFA), 137 to 157 (LGCE…LTPP), 171 to 191 (VLLP…TGFG), 202 to 222 (GLAI…SYLV), 242 to 262 (LAVF…FNAP), 265 to 285 (AVFM…AVAV), 292 to 312 (VLCI…IQIF), and 340 to 360 (KIVI…LATL).

It belongs to the glycosyltransferase 4 family. MraY subfamily. The cofactor is Mg(2+).

The protein resides in the cell inner membrane. The catalysed reaction is UDP-N-acetyl-alpha-D-muramoyl-L-alanyl-gamma-D-glutamyl-meso-2,6-diaminopimeloyl-D-alanyl-D-alanine + di-trans,octa-cis-undecaprenyl phosphate = di-trans,octa-cis-undecaprenyl diphospho-N-acetyl-alpha-D-muramoyl-L-alanyl-D-glutamyl-meso-2,6-diaminopimeloyl-D-alanyl-D-alanine + UMP. Its pathway is cell wall biogenesis; peptidoglycan biosynthesis. Catalyzes the initial step of the lipid cycle reactions in the biosynthesis of the cell wall peptidoglycan: transfers peptidoglycan precursor phospho-MurNAc-pentapeptide from UDP-MurNAc-pentapeptide onto the lipid carrier undecaprenyl phosphate, yielding undecaprenyl-pyrophosphoryl-MurNAc-pentapeptide, known as lipid I. In Gluconobacter oxydans (strain 621H) (Gluconobacter suboxydans), this protein is Phospho-N-acetylmuramoyl-pentapeptide-transferase.